The sequence spans 320 residues: Fructose-1,6-bisphosphatase class 1 (320 aa).

Mg(2+) is bound by residues Glu-105, Asp-124, Leu-126, and Asp-127. Residues 127–130 (DGSS), Tyr-233, and Lys-263 contribute to the substrate site. A Mg(2+)-binding site is contributed by Glu-269.

The protein belongs to the FBPase class 1 family. Homotetramer. It depends on Mg(2+) as a cofactor.

It localises to the cytoplasm. It catalyses the reaction beta-D-fructose 1,6-bisphosphate + H2O = beta-D-fructose 6-phosphate + phosphate. The protein operates within carbohydrate biosynthesis; gluconeogenesis. The polypeptide is Fructose-1,6-bisphosphatase class 1 (Methanocorpusculum labreanum (strain ATCC 43576 / DSM 4855 / Z)).